A 189-amino-acid polypeptide reads, in one-letter code: Putative L,D-transpeptidase in ATP synthase subunits region ORF 5 (189 aa).

A signal peptide (tat-type signal) is located at residues 1 to 35 (MTDTLNRRAAMALGLASAAGAALATPALSQDAAPA). Positions 59–189 (PMLVADTFSR…CPVGTRVRVI (131 aa)) constitute a L,D-TPase catalytic domain. His149 functions as the Proton donor/acceptor in the catalytic mechanism. Catalysis depends on Cys165, which acts as the Nucleophile.

Belongs to the YkuD family. Predicted to be exported by the Tat system. The position of the signal peptide cleavage has not been experimentally proven.

It participates in cell wall biogenesis; peptidoglycan biosynthesis. The protein is Putative L,D-transpeptidase in ATP synthase subunits region ORF 5 of Fuscovulum blasticum (Rhodobacter blasticus).